The chain runs to 125 residues: Ribonuclease P protein component (125 aa).

It belongs to the RnpA family. In terms of assembly, consists of a catalytic RNA component (M1 or rnpB) and a protein subunit.

The enzyme catalyses Endonucleolytic cleavage of RNA, removing 5'-extranucleotides from tRNA precursor.. RNaseP catalyzes the removal of the 5'-leader sequence from pre-tRNA to produce the mature 5'-terminus. It can also cleave other RNA substrates such as 4.5S RNA. The protein component plays an auxiliary but essential role in vivo by binding to the 5'-leader sequence and broadening the substrate specificity of the ribozyme. The sequence is that of Ribonuclease P protein component from Oleidesulfovibrio alaskensis (strain ATCC BAA-1058 / DSM 17464 / G20) (Desulfovibrio alaskensis).